A 155-amino-acid polypeptide reads, in one-letter code: Phytohormone-binding protein CSBP (155 aa).

Residues Leu22, Gln67, Glu69, and 139 to 142 contribute to the trans-zeatin site; that span reads TLMY. A gibberellin A3-binding site is contributed by Gln67. Thr139 is a gibberellin A3 binding site.

The protein belongs to the BetVI family. As to quaternary structure, monomer.

Binds the cytokinin trans-zeatin in vitro. Binds gibberellin A3 (GA3) in vitro. In Vigna radiata var. radiata (Mung bean), this protein is Phytohormone-binding protein CSBP.